The sequence spans 424 residues: O-methyltransferase aunD (424 aa).

Asp-275 lines the S-adenosyl-L-methionine pocket. Residue His-326 is the Proton acceptor of the active site.

The protein belongs to the class I-like SAM-binding methyltransferase superfamily. Cation-independent O-methyltransferase family.

It functions in the pathway secondary metabolite biosynthesis. O-methyltransferase; part of the gene cluster that mediates the biosynthesis of aurasperone B, a dimeric gamma-naphthopyrone. The first step in the biosynthesis of aurasperone B is the production of gamma-naphthopyrone precursor YWA1 by the non-reducing polyketide synthase albA, via condensation of one acetyl-CoA starter unit with 6 malonyl-CoA units. YWA1 is then methylated by aunE at position C-6 to yield foncesin which is further methylated at position C-8 by aunD to produce fonsecin B. A key enzyme in the biosynthetic pathway is the cytochrome P450 monooxygenase aunB which catalyzes the oxidative dimerization of fonsecin B to aurasperone B. AunB also catalyzes the oxidative dimerization of rubrofusarin B into aurasperone A. The chain is O-methyltransferase aunD from Aspergillus niger (strain ATCC MYA-4892 / CBS 513.88 / FGSC A1513).